The primary structure comprises 282 residues: Pantothenate synthetase (282 aa).

30-37 serves as a coordination point for ATP; sequence MGYLHEGH. Residue H37 is the Proton donor of the active site. Q61 serves as a coordination point for (R)-pantoate. Q61 lines the beta-alanine pocket. 147 to 150 is a binding site for ATP; that stretch reads GMKD. Q153 contributes to the (R)-pantoate binding site. ATP is bound by residues V176 and 184–187; that span reads KSSR.

This sequence belongs to the pantothenate synthetase family. Homodimer.

The protein resides in the cytoplasm. It catalyses the reaction (R)-pantoate + beta-alanine + ATP = (R)-pantothenate + AMP + diphosphate + H(+). The protein operates within cofactor biosynthesis; (R)-pantothenate biosynthesis; (R)-pantothenate from (R)-pantoate and beta-alanine: step 1/1. Functionally, catalyzes the condensation of pantoate with beta-alanine in an ATP-dependent reaction via a pantoyl-adenylate intermediate. The polypeptide is Pantothenate synthetase (Bacillus anthracis (strain A0248)).